We begin with the raw amino-acid sequence, 279 residues long: Diaminopimelate epimerase (279 aa).

Substrate is bound by residues Asn13 and Asn66. Cys75 acts as the Proton donor in catalysis. Residues 76-77 (GN), Asn162, Asn195, and 213-214 (ER) contribute to the substrate site. Residue Cys222 is the Proton acceptor of the active site. Residue 223-224 (GT) participates in substrate binding.

The protein belongs to the diaminopimelate epimerase family. As to quaternary structure, homodimer.

The protein localises to the cytoplasm. The catalysed reaction is (2S,6S)-2,6-diaminopimelate = meso-2,6-diaminopimelate. Its pathway is amino-acid biosynthesis; L-lysine biosynthesis via DAP pathway; DL-2,6-diaminopimelate from LL-2,6-diaminopimelate: step 1/1. In terms of biological role, catalyzes the stereoinversion of LL-2,6-diaminopimelate (L,L-DAP) to meso-diaminopimelate (meso-DAP), a precursor of L-lysine and an essential component of the bacterial peptidoglycan. This Synechocystis sp. (strain ATCC 27184 / PCC 6803 / Kazusa) protein is Diaminopimelate epimerase.